Consider the following 85-residue polypeptide: Large ribosomal subunit protein bL27 (85 aa).

Belongs to the bacterial ribosomal protein bL27 family.

The sequence is that of Large ribosomal subunit protein bL27 from Xylella fastidiosa (strain Temecula1 / ATCC 700964).